The chain runs to 349 residues: tRNA pseudouridine synthase D (349 aa).

Substrate is bound at residue Phe-27. The Nucleophile role is filled by Asp-80. A substrate-binding site is contributed by Asn-129. One can recognise a TRUD domain in the interval 155–303 (GVPNYFGAQR…VEAARRAMLL (149 aa)). Phe-329 lines the substrate pocket.

This sequence belongs to the pseudouridine synthase TruD family.

The catalysed reaction is uridine(13) in tRNA = pseudouridine(13) in tRNA. In terms of biological role, responsible for synthesis of pseudouridine from uracil-13 in transfer RNAs. In Escherichia coli O45:K1 (strain S88 / ExPEC), this protein is tRNA pseudouridine synthase D.